The primary structure comprises 115 residues: Large ribosomal subunit protein bL19 (115 aa).

It belongs to the bacterial ribosomal protein bL19 family.

Functionally, this protein is located at the 30S-50S ribosomal subunit interface and may play a role in the structure and function of the aminoacyl-tRNA binding site. This is Large ribosomal subunit protein bL19 from Nitratidesulfovibrio vulgaris (strain DSM 19637 / Miyazaki F) (Desulfovibrio vulgaris).